Consider the following 994-residue polypeptide: MAELEKLAAARLEKEASNNTVNPVREVSEDDVKDVSGETTVVTTSISEGANESLSKKEDEPALIGSNVPEELEGNSLEVQSAITTDLEKVSSTPTPSNAEKESPEATEVRIVEEGKLEKADPSVVNEELSKEILEDPEVVPSPAKMYTALKAVDGDMPVLKSENGNDGDTDANTADEDNENDEDDVDEDEDEDDADMDTAKALAELAMTAGKSGNPAFSGTKPSMGAAGPSLPSLPQRPAVRKPIAATASDSPGRNTQRPNGALSTQITSTTDESASSDAAEGDETREKLQNIRVKFLRLAHRLGQSPQNVVVAQVLYRLGLAESLRGGSAPNRSGAFSFDRANALAEEQEAANQEEELDFACTILVLGKTGVGKSSTINSIFDERKSVTSAFKPSTNKVQEVIGTVHGIKVRVIDTPGLLPSVADQQHNERIMGQVKKYIKKASPDIVLYFDRLDMQSRDFGDLPLLRTITDLFGAAVWFNAIVVLTHASSAPPDGPNGVPLSYEMFVAQRSHVVQQTIRQAAGDMRLMNPVSLVENHPACRTNRTGQRVLPNGQIWKPQLLLLCFASKILAEANSLLKLQETTAPGRPFGQRSRVPPLPFLLSSLLQSRAQLKLPDEQAGESDESDDDEEEEDSDADDYDELPPFRPLSKEELEDLTKEQREDYMEELADRERMFQKKQYREEIRRRKEAKKRQAQMSKEELAEAEEAEDEAGNAAAVPVPMPDMALPPSFDSDNPTHRYRYLETANQWLVRPVLETHGWDHDAGYDGFNVEKMFVVKEKIPASVSGQVTKDKKEAQVNFEAAASLRHGEGKVTLTGFDVQTIGKDLAYTVRAETRFNNFKRNKTTAGVTATYLNDTIAAGVKLEDRVLIGKRVKLVVNGGVLTGKGDKAYGGSLEATLRGKEYPLSRTLSTLGLSVMDWHGDLAIGGNLQSQFMVGKTMMVGRANLNNRGSGQVSIRASSSEQLQMVLIGIVPILRSLINCRFGFGGQSQQ.

Disordered regions lie at residues 14–61 (KEAS…EDEP), 84–124 (TTDL…DPSV), and 152–287 (AVDG…DETR). Composition is skewed to polar residues over residues 37-53 (GETT…ANES) and 84-98 (TTDL…TPSN). Residues 99–121 (AEKESPEATEVRIVEEGKLEKAD) are compositionally biased toward basic and acidic residues. Positions 166-197 (NDGDTDANTADEDNENDEDDVDEDEDEDDADM) are enriched in acidic residues. Over residues 249–268 (ASDSPGRNTQRPNGALSTQI) the composition is skewed to polar residues. Positions 269 to 280 (TSTTDESASSDA) are enriched in low complexity. Positions 360-589 (DFACTILVLG…KLQETTAPGR (230 aa)) constitute an AIG1-type G domain. The G1 stretch occupies residues 369–376 (GKTGVGKS). 372-377 (GVGKSS) serves as a coordination point for GTP. Residue Ser-376 coordinates Mg(2+). The tract at residues 395–399 (PSTNK) is G2. Residues 416-419 (DTPG) are G3. The interval 488-491 (THAS) is G4. GTP is bound by residues His-489 and 537–538 (EN). A G5 region spans residues 537–539 (ENH). Disordered regions lie at residues 616 to 659 (LPDE…EDLT) and 691 to 716 (EAKK…EAGN). The segment covering 620 to 643 (QAGESDESDDDEEEEDSDADDYDE) has biased composition (acidic residues). Over residues 650–659 (LSKEELEDLT) the composition is skewed to basic and acidic residues. A compositionally biased stretch (acidic residues) spans 705–714 (AEAEEAEDEA). Residues 969–989 (MVLIGIVPILRSLINCRFGFG) form a helical membrane-spanning segment.

It belongs to the TRAFAC class TrmE-Era-EngA-EngB-Septin-like GTPase superfamily. AIG1/Toc34/Toc159-like paraseptin GTPase family. TOC159 subfamily. As to quaternary structure, part of the TOC core complex. Requires Mg(2+) as cofactor.

The protein localises to the plastid. It is found in the chloroplast outer membrane. In terms of biological role, GTPase involved in protein precursor import into chloroplasts. Seems to recognize chloroplast-destined precursor proteins and regulate their presentation to the translocation channel through GTP hydrolysis. Probably specialized in the import of nuclear encoded non-photosynthetic preproteins from the cytoplasm to the chloroplast. The sequence is that of Translocase of chloroplast 108, chloroplastic from Physcomitrium patens (Spreading-leaved earth moss).